A 1244-amino-acid chain; its full sequence is SWI/SNF chromatin remodeling complex subunit swsn-7 (1244 aa).

The 93-residue stretch at 24 to 116 (QRKMAEFYNS…YLSKFEQVET (93 aa)) folds into the ARID domain. Residues 486–496 (FTQGSNQQQNP) are compositionally biased toward polar residues. 3 disordered regions span residues 486–534 (FTQG…GAAP), 556–583 (NREQ…ILAH), and 597–619 (DRRT…ESQL). The segment covering 497 to 508 (HHSQGGHQLGHS) has biased composition (low complexity). Positions 556–566 (NREQYSTQSSQ) are enriched in polar residues. The span at 567–578 (PHPPHTNVPPSP) shows a compositional bias: pro residues. Positions 610–619 (PSTNSGESQL) are enriched in polar residues. The segment at residues 623 to 697 (TEKWIRQNCV…IVAQGIRLIR (75 aa)) is a DNA-binding region (RFX-type winged-helix). Residues 1134–1244 (EEEQQKMLSE…TTPVRAGAGI (111 aa)) are disordered. Over residues 1142–1158 (SEVPSSASLSSMAGSSS) the composition is skewed to low complexity. 2 stretches are compositionally biased toward polar residues: residues 1159–1186 (QLPT…SNKP) and 1194–1212 (LNFS…FTAG). Residues 1220-1231 (PIQQHIPSQPSP) show a composition bias toward low complexity.

In terms of assembly, component of the SWI/SNF-B (PBAF) chromatin remodeling complex.

It localises to the nucleus. In terms of biological role, involved in transcriptional activation and repression of select genes by chromatin remodeling (alteration of DNA-nucleosome topology). Required for the stability of the SWI/SNF chromatin remodeling complex SWI/SNF-B (PBAF). Required for regulation of a stress response gene network, probably as part of the PBAF complex and perhaps acting in concert with histone demethylase jmjc-1. Binds to the ethanol and stress response elements (ESRE) in the promoter regions of hsp-16.1 and hsp-16.2, probably as part of the PBAF complex. The chain is SWI/SNF chromatin remodeling complex subunit swsn-7 from Caenorhabditis elegans.